The primary structure comprises 343 residues: L-threonine 3-dehydrogenase (343 aa).

C38 lines the Zn(2+) pocket. Catalysis depends on charge relay system residues T40 and H43. Positions 63, 64, 93, 96, 99, and 107 each coordinate Zn(2+). NAD(+)-binding positions include I175, D195, R200, 262-264 (LGI), and 286-287 (IY).

The protein belongs to the zinc-containing alcohol dehydrogenase family. Homotetramer. Requires Zn(2+) as cofactor.

Its subcellular location is the cytoplasm. The enzyme catalyses L-threonine + NAD(+) = (2S)-2-amino-3-oxobutanoate + NADH + H(+). It participates in amino-acid degradation; L-threonine degradation via oxydo-reductase pathway; glycine from L-threonine: step 1/2. In terms of biological role, catalyzes the NAD(+)-dependent oxidation of L-threonine to 2-amino-3-ketobutyrate. In Paraburkholderia phytofirmans (strain DSM 17436 / LMG 22146 / PsJN) (Burkholderia phytofirmans), this protein is L-threonine 3-dehydrogenase.